We begin with the raw amino-acid sequence, 37 residues long: Large ribosomal subunit protein bL36 (37 aa).

This sequence belongs to the bacterial ribosomal protein bL36 family.

The protein is Large ribosomal subunit protein bL36 of Marinobacter nauticus (strain ATCC 700491 / DSM 11845 / VT8) (Marinobacter aquaeolei).